Consider the following 499-residue polypeptide: Maturase K (499 aa).

Belongs to the intron maturase 2 family. MatK subfamily.

The protein resides in the plastid. Its subcellular location is the chloroplast. Usually encoded in the trnK tRNA gene intron. Probably assists in splicing its own and other chloroplast group II introns. This chain is Maturase K, found in Batis maritima (Maritime saltwort).